Consider the following 1047-residue polypeptide: FACT complex subunit SPT16 (1047 aa).

Residue Ala2 is modified to N-acetylalanine. Residue Lys139 is modified to N6-acetyllysine. Residue Ser188 is modified to Phosphoserine. Residues Lys196 and Lys223 each carry the N6-acetyllysine modification. A coiled-coil region spans residues Leu432–Lys507. Ser455 carries the post-translational modification Phosphoserine. The interval Arg492 to Met518 is disordered. Lys497 is covalently cross-linked (Glycyl lysine isopeptide (Lys-Gly) (interchain with G-Cter in SUMO2)). Residues Glu499 to Asn514 are compositionally biased toward polar residues. Ser508 is subject to Phosphoserine. The residue at position 513 (Lys513) is an N6-acetyllysine; alternate. Residue Lys513 forms a Glycyl lysine isopeptide (Lys-Gly) (interchain with G-Cter in SUMO2); alternate linkage. Lys647 is covalently cross-linked (Glycyl lysine isopeptide (Lys-Gly) (interchain with G-Cter in SUMO2)). Phosphoserine is present on residues Ser650 and Ser658. 2 positions are modified to N6-acetyllysine: Lys732 and Lys786. The residue at position 903 (Thr903) is a Phosphothreonine. Lys904 is subject to N6-acetyllysine. Residues Glu918 to Lys1047 form a disordered region. Residues Pro927–Ser973 show a composition bias toward acidic residues. Residues Ser979, Ser982, Ser986, and Ser1015 each carry the phosphoserine modification. A compositionally biased stretch (basic and acidic residues) spans Glu985–Arg1005. Positions Val1024 to Ser1039 are enriched in low complexity.

The protein belongs to the peptidase M24 family. SPT16 subfamily. In terms of assembly, interacts with MYOG (via C-terminal region). Component of the FACT complex, a stable heterodimer of SSRP1 and SUPT16H. Also a component of a CK2-SPT16-SSRP1 complex which forms following UV irradiation, composed of SSRP1, SUPT16H, CSNK2A1, CSNK2A2 and CSNK2B. Interacts with NEK9. Binds to histone H2A-H2B. Identified in a centromere complex containing histones H2A, H2B and H4, and at least CENPA, CENPB, CENPC, CENPT, CENPN, HJURP, SUPT16H, SSRP1 and RSF1. Interacts with GTF2E2. (Microbial infection) Interacts with Herpes simplex virus 1 (HHV-1) protein ICP22; this interaction relocalizes the FACT complex to viral genomes in infected cells. Post-translationally, ADP-ribosylated. ADP-ribosylation by PARP1 is induced by genotoxic stress and correlates with dissociation of FACT from chromatin. In terms of tissue distribution, ubiquitous.

It is found in the nucleus. Its subcellular location is the chromosome. In terms of biological role, component of the FACT complex, a general chromatin factor that acts to reorganize nucleosomes. The FACT complex is involved in multiple processes that require DNA as a template such as mRNA elongation, DNA replication and DNA repair. During transcription elongation the FACT complex acts as a histone chaperone that both destabilizes and restores nucleosomal structure. It facilitates the passage of RNA polymerase II and transcription by promoting the dissociation of one histone H2A-H2B dimer from the nucleosome, then subsequently promotes the reestablishment of the nucleosome following the passage of RNA polymerase II. The FACT complex is probably also involved in phosphorylation of 'Ser-392' of p53/TP53 via its association with CK2 (casein kinase II). The sequence is that of FACT complex subunit SPT16 (SUPT16H) from Homo sapiens (Human).